A 237-amino-acid polypeptide reads, in one-letter code: uncharacterized protein (237 aa).

The tract at residues 213-237 is disordered; it reads GQGKYLKLDSNTTENKTTKQNETGG. The segment covering 223-237 has biased composition (low complexity); the sequence is NTTENKTTKQNETGG.

This is an uncharacterized protein from Methanothermobacter thermautotrophicus (Methanobacterium thermoformicicum).